Reading from the N-terminus, the 926-residue chain is Alanine--tRNA ligase (926 aa).

Zn(2+)-binding residues include H611, H615, C714, and H718.

This sequence belongs to the class-II aminoacyl-tRNA synthetase family. Requires Zn(2+) as cofactor.

It localises to the cytoplasm. The catalysed reaction is tRNA(Ala) + L-alanine + ATP = L-alanyl-tRNA(Ala) + AMP + diphosphate. Its function is as follows. Catalyzes the attachment of alanine to tRNA(Ala) in a two-step reaction: alanine is first activated by ATP to form Ala-AMP and then transferred to the acceptor end of tRNA(Ala). Also edits incorrectly charged Ser-tRNA(Ala) and Gly-tRNA(Ala) via its editing domain. In Methanosarcina mazei (strain ATCC BAA-159 / DSM 3647 / Goe1 / Go1 / JCM 11833 / OCM 88) (Methanosarcina frisia), this protein is Alanine--tRNA ligase.